The primary structure comprises 156 residues: Small ribosomal subunit protein bS6 (156 aa).

Residues 98–156 form a disordered region; it reads GHDFRDQRSHHGQAGEFRKREPQQKSKEQSEFSKEKKSFSKSVTKKTVVSKPKETKEEK. Positions 113 to 135 are enriched in basic and acidic residues; the sequence is EFRKREPQQKSKEQSEFSKEKKS. The segment covering 137–147 has biased composition (low complexity); it reads SKSVTKKTVVS.

This sequence belongs to the bacterial ribosomal protein bS6 family.

Binds together with bS18 to 16S ribosomal RNA. This chain is Small ribosomal subunit protein bS6, found in Mycoplasmopsis synoviae (strain 53) (Mycoplasma synoviae).